A 466-amino-acid polypeptide reads, in one-letter code: Fez family zinc finger protein 1 (466 aa).

The Engrailed homology 1 repressor motif lies at 34–49; that stretch reads PLAFSIERIMSRTPEP. 6 C2H2-type zinc fingers span residues 261–283, 289–311, 317–339, 345–367, 373–395, and 401–424; these read FTCEVCGKVFNAHYNLTRHMPVH, FVCKICGKGFRQASTLCRHKIIH, HKCNQCGKAFNRSSTLNTHTRIH, FVCEFCGKGFHQKGNYKNHKLTH, FKCNICNKAFHQIYNLTFHMHTH, and FTCPTCGKGFCRNFDLKKHVRKLH. The segment at 446–466 is disordered; the sequence is LPNREQSHTIIQSPQLQKSVY. Positions 453–466 are enriched in polar residues; that stretch reads HTIIQSPQLQKSVY.

Belongs to the krueppel C2H2-type zinc-finger protein family.

Its subcellular location is the nucleus. In terms of biological role, transcription repressor. Involved in the development of the forebrain region. This Xenopus laevis (African clawed frog) protein is Fez family zinc finger protein 1 (fezf1).